The chain runs to 178 residues: Large ribosomal subunit protein bL25 (178 aa).

It belongs to the bacterial ribosomal protein bL25 family. CTC subfamily. As to quaternary structure, part of the 50S ribosomal subunit; part of the 5S rRNA/L5/L18/L25 subcomplex. Contacts the 5S rRNA. Binds to the 5S rRNA independently of L5 and L18.

In terms of biological role, this is one of the proteins that binds to the 5S RNA in the ribosome where it forms part of the central protuberance. The sequence is that of Large ribosomal subunit protein bL25 from Helicobacter pylori (strain J99 / ATCC 700824) (Campylobacter pylori J99).